Here is a 353-residue protein sequence, read N- to C-terminus: tRNA N6-adenosine threonylcarbamoyltransferase (353 aa).

Residues His109 and His113 each contribute to the Fe cation site. Residues 136-140 (TVSGG), Asp169, Gly182, Asp186, and Asn284 each bind substrate. Asp312 serves as a coordination point for Fe cation.

Belongs to the KAE1 / TsaD family. It depends on Fe(2+) as a cofactor.

Its subcellular location is the cytoplasm. It catalyses the reaction L-threonylcarbamoyladenylate + adenosine(37) in tRNA = N(6)-L-threonylcarbamoyladenosine(37) in tRNA + AMP + H(+). Its function is as follows. Required for the formation of a threonylcarbamoyl group on adenosine at position 37 (t(6)A37) in tRNAs that read codons beginning with adenine. Is involved in the transfer of the threonylcarbamoyl moiety of threonylcarbamoyl-AMP (TC-AMP) to the N6 group of A37, together with TsaE and TsaB. TsaD likely plays a direct catalytic role in this reaction. The polypeptide is tRNA N6-adenosine threonylcarbamoyltransferase (Chlorobaculum tepidum (strain ATCC 49652 / DSM 12025 / NBRC 103806 / TLS) (Chlorobium tepidum)).